Consider the following 1034-residue polypeptide: Phosphoenolpyruvate carboxylase (1034 aa).

Residues histidine 203 and lysine 680 contribute to the active site.

Belongs to the PEPCase type 1 family. Requires Mg(2+) as cofactor.

It carries out the reaction oxaloacetate + phosphate = phosphoenolpyruvate + hydrogencarbonate. Its function is as follows. Forms oxaloacetate, a four-carbon dicarboxylic acid source for the tricarboxylic acid cycle. In Synechocystis sp. (strain ATCC 27184 / PCC 6803 / Kazusa), this protein is Phosphoenolpyruvate carboxylase (ppc).